The sequence spans 265 residues: Formyltransferase/hydrolase complex Fhc subunit C (265 aa).

Belongs to the FwdC/FmdC family. Octaheteromer. Part of the formyltransferase/hydrolase complex fhc; composed of FhcA, FhcB, FhcC and FhcD.

The protein resides in the cytoplasm. It participates in one-carbon metabolism; formaldehyde degradation; formate from formaldehyde (H(4)MPT route): step 4/5. Involved in the transformation of 5-formyl tetrahydromethanopterin (5-formyl-H(4)MPT) to methanofuran (MFR) and formate via the formylmethanofuran (formyl-MFR). This chain is Formyltransferase/hydrolase complex Fhc subunit C (fhcC), found in Methylorubrum extorquens (strain ATCC 14718 / DSM 1338 / JCM 2805 / NCIMB 9133 / AM1) (Methylobacterium extorquens).